A 494-amino-acid chain; its full sequence is Prenylcysteine oxidase 1-like (494 aa).

Residues 1 to 22 (MARAAPLLAALTALLAAAAAGG) form the signal peptide. Asparagine 342 carries an N-linked (GlcNAc...) asparagine glycan.

The protein belongs to the prenylcysteine oxidase family. It depends on FAD as a cofactor.

It is found in the secreted. In terms of biological role, likely to have oxidoreductase activity. Required in the mevalonate pathway to regulate prenylation and enhances the bactericidal activity of neutrophils. The chain is Prenylcysteine oxidase 1-like (PCYOX1L) from Homo sapiens (Human).